A 108-amino-acid polypeptide reads, in one-letter code: Vacuolar ATPase assembly integral membrane protein VMA21 (108 aa).

The Cytoplasmic segment spans residues methionine 1–serine 34. Residues valine 35 to phenylalanine 55 form a helical membrane-spanning segment. Residues glycine 56 to tyrosine 68 lie on the Lumenal side of the membrane. The chain crosses the membrane as a helical span at residues alanine 69 to alanine 89. The Cytoplasmic portion of the chain corresponds to arginine 90 to glutamate 108.

This sequence belongs to the VMA21 family.

The protein localises to the endoplasmic reticulum membrane. Its subcellular location is the endoplasmic reticulum-Golgi intermediate compartment membrane. The protein resides in the cytoplasmic vesicle. It is found in the COPII-coated vesicle membrane. Functionally, required for the assembly of the V0 complex of the vacuolar ATPase (V-ATPase) in the endoplasmic reticulum. The chain is Vacuolar ATPase assembly integral membrane protein VMA21 from Ajellomyces capsulatus (strain NAm1 / WU24) (Darling's disease fungus).